We begin with the raw amino-acid sequence, 2181 residues long: Non-reducing polyketide synthase dpmaA (2181 aa).

The interval 74–180 (QWVKGNSTQP…LALCCGAYID (107 aa)) is N-terminal acylcarrier protein transacylase domain (SAT). The Ketosynthase family 3 (KS3) domain occupies 347–779 (QAQLLVLGPV…GTNAAMLVCQ (433 aa)). Residues cysteine 525, histidine 661, and histidine 702 each act as for beta-ketoacyl synthase activity in the active site. The tract at residues 891-1193 (VLAGQTGRRV…SFYPAALGEP (303 aa)) is malonyl-CoA:ACP transacylase (MAT) domain. Serine 977 acts as the For acyl/malonyl transferase activity in catalysis. The interval 1269–1401 (VSLIGKTQNA…GVITLQEVYS (133 aa)) is N-terminal hotdog fold. A PKS/mFAS DH domain is found at 1269–1579 (VSLIGKTQNA…FQKIAISSLK (311 aa)). The segment at 1276 to 1573 (QNAGVQTVEY…TILGAKFQKI (298 aa)) is product template (PT) domain. The segment at 1425-1579 (SASVVQGDFI…FQKIAISSLK (155 aa)) is C-terminal hotdog fold. A compositionally biased stretch (polar residues) spans 1587–1603 (GVPQTSGGRTPSSSITE). Disordered regions lie at residues 1587–1618 (GVPQ…PIPG) and 1652–1675 (ISGS…AMET). Residues 1653 to 1670 (SGSSRSTSSSPPSLESRS) show a composition bias toward low complexity. The Carrier domain maps to 1677–1753 (EITEGAGSAL…TLFHTIFPQQ (77 aa)). Residue serine 1713 is modified to O-(pantetheine 4'-phosphoryl)serine. A methyltransferase (CMeT) domain region spans residues 1982–2164 (EFMNCLFSYN…QSGFDHIDWT (183 aa)).

It functions in the pathway secondary metabolite biosynthesis; terpenoid biosynthesis. Non-reducing polyketide synthase; part of the gene cluster that mediates the biosynthesis of the diterpenoid pyrones subglutinols A and B. The first step of the pathway is the synthesis of the alpha-pyrone moiety by the polyketide synthase dpmaA via condensation of one acetyl-CoA starter unit with 3 malonyl-CoA units and 2 methylations. The alpha-pyrone is then combined with geranylgeranyl pyrophosphate (GGPP) formed by the GGPP synthase dpmaD through the action of the prenyltransferase dpmaC to yield a linear alpha-pyrone diterpenoid. Subsequent steps in the diterpenoid pyrone biosynthetic pathway involve the decalin core formation, which is initiated by the epoxidation of the C10-C11 olefin by the FAD-dependent oxidoreductase dpmaE, and is followed by a cyclization cascade catalyzed by the terpene cyclase dpmaB. The dehydrogenase dpmaF is then involved in tetrahydrofuran (THF) ring formation at the C5 unit to complete the formation of subglutinols A and B. This Metarhizium anisopliae (Entomophthora anisopliae) protein is Non-reducing polyketide synthase dpmaA.